A 135-amino-acid polypeptide reads, in one-letter code: Small ribosomal subunit protein bS18 (135 aa).

The interval 1–65 is disordered; that stretch reads MARPDMGGPK…GDEGGGRRGF (65 aa). The segment covering 9 to 41 has biased composition (gly residues); that stretch reads PKTGGFGGPRSGGFGGGGGGGGGFGGGGFGGGR. The segment covering 42-61 has biased composition (basic and acidic residues); it reads GGDRGDRGDRDDRGGDEGGG.

This sequence belongs to the bacterial ribosomal protein bS18 family. As to quaternary structure, part of the 30S ribosomal subunit. Forms a tight heterodimer with protein bS6.

Binds as a heterodimer with protein bS6 to the central domain of the 16S rRNA, where it helps stabilize the platform of the 30S subunit. In Anaeromyxobacter sp. (strain K), this protein is Small ribosomal subunit protein bS18.